A 424-amino-acid chain; its full sequence is ATP synthase subunit beta, mitochondrial (424 aa).

Residues 1-60 (MFRLSSGLLKGGACASRSRIPQLGRSLYSTATSAGADKTQGKIHTVIGAVVDVQFNHGRL) constitute a mitochondrion transit peptide. ATP contacts are provided by residues 187–194 (GGAGVGKT), 188–195 (GAGVGKTV), 219–220 (ER), and Tyr374.

The protein belongs to the ATPase alpha/beta chains family. As to quaternary structure, F-type ATPases have 2 components, CF(1) - the catalytic core - and CF(0) - the membrane proton channel. CF(1) has five subunits: alpha(3), beta(3), gamma(1), delta(1), epsilon(1). CF(0) has three main subunits: a, b and c.

The protein resides in the mitochondrion. It localises to the mitochondrion inner membrane. The catalysed reaction is ATP + H2O + 4 H(+)(in) = ADP + phosphate + 5 H(+)(out). Functionally, ATP synthase subunit beta; part of the gene cluster that mediates the biosynthesis of citreoviridin, an inhibitor of the of F1-ATPase beta-subunit. Mitochondrial membrane ATP synthase (F(1)F(0) ATP synthase or Complex V) produces ATP from ADP in the presence of a proton gradient across the membrane which is generated by electron transport complexes of the respiratory chain. Whereas ctvA to ctvD constitute the core biosynthetic gene cluster, ctvE acts as a self-resistance gene. This Aspergillus terreus (strain NIH 2624 / FGSC A1156) protein is ATP synthase subunit beta, mitochondrial.